The sequence spans 473 residues: Probable acid phosphatase DDB_G0284755 (473 aa).

His94 functions as the Nucleophile in the catalytic mechanism. Asp359 functions as the Proton donor in the catalytic mechanism.

This sequence belongs to the histidine acid phosphatase family.

The enzyme catalyses a phosphate monoester + H2O = an alcohol + phosphate. The sequence is that of Probable acid phosphatase DDB_G0284755 from Dictyostelium discoideum (Social amoeba).